We begin with the raw amino-acid sequence, 270 residues long: ATP synthase subunit a (270 aa).

The next 5 membrane-spanning stretches (helical) occupy residues 38–58 (VHID…GIFY), 98–118 (IAPL…MDLV), 143–163 (DVNI…YYSI), 208–228 (LFGN…MLPW), and 239–259 (AIFH…LTIV).

It belongs to the ATPase A chain family. As to quaternary structure, F-type ATPases have 2 components, CF(1) - the catalytic core - and CF(0) - the membrane proton channel. CF(1) has five subunits: alpha(3), beta(3), gamma(1), delta(1), epsilon(1). CF(0) has three main subunits: a(1), b(2) and c(9-12). The alpha and beta chains form an alternating ring which encloses part of the gamma chain. CF(1) is attached to CF(0) by a central stalk formed by the gamma and epsilon chains, while a peripheral stalk is formed by the delta and b chains.

The protein resides in the cell inner membrane. Its function is as follows. Key component of the proton channel; it plays a direct role in the translocation of protons across the membrane. The protein is ATP synthase subunit a of Vibrio parahaemolyticus serotype O3:K6 (strain RIMD 2210633).